The primary structure comprises 151 residues: Large ribosomal subunit protein bL9 (151 aa).

This sequence belongs to the bacterial ribosomal protein bL9 family.

Functionally, binds to the 23S rRNA. In Pseudothermotoga lettingae (strain ATCC BAA-301 / DSM 14385 / NBRC 107922 / TMO) (Thermotoga lettingae), this protein is Large ribosomal subunit protein bL9.